Consider the following 580-residue polypeptide: Peptide transporter PTR_B (580 aa).

A compositionally biased stretch (basic and acidic residues) spans Met1–Asp30. The tract at residues Met1–His45 is disordered. A helical membrane pass occupies residues Ile57 to Leu78. A glycan (N-linked (GlcNAc...) asparagine) is linked at Asn101. The next 11 helical transmembrane spans lie at Ala107 to Ala127, Tyr134 to Thr154, Thr163 to Ile183, Val219 to Ala239, Phe249 to Leu269, Ala326 to Met346, Ile370 to Ile390, Ile402 to Phe422, Ile449 to Thr469, Ser484 to Leu504, and Met513 to Phe533.

It belongs to the major facilitator superfamily. Proton-dependent oligopeptide transporter (POT/PTR) (TC 2.A.17) family.

It localises to the cell membrane. It catalyses the reaction a dipeptide(out) + H(+)(out) = a dipeptide(in) + H(+)(in). The catalysed reaction is an L-amino acid tripeptide(out) + H(+)(out) = an L-amino acid tripeptide(in) + H(+)(in). In terms of biological role, peptide transporter that exploits the inwardly directed proton motive force to facilitate the cellular uptake of di/tripeptides. Shows strong uptake specificity towards the dipeptides Tyr-Phe and Gly-His, when compared to PTR_A and PTR_C. The polypeptide is Peptide transporter PTR_B (Candidozyma auris (Yeast)).